The primary structure comprises 346 residues: Elongation factor Ts (346 aa).

The segment at 80–83 (TDFV) is involved in Mg(2+) ion dislocation from EF-Tu.

It belongs to the EF-Ts family.

The protein localises to the cytoplasm. Functionally, associates with the EF-Tu.GDP complex and induces the exchange of GDP to GTP. It remains bound to the aminoacyl-tRNA.EF-Tu.GTP complex up to the GTP hydrolysis stage on the ribosome. The sequence is that of Elongation factor Ts from Streptococcus pyogenes serotype M3 (strain ATCC BAA-595 / MGAS315).